A 42-amino-acid chain; its full sequence is Photosystem II reaction center protein J (42 aa).

The chain crosses the membrane as a helical span at residues 10–30 (IPLWLIGTVVGSLAIGLLAIF).

It belongs to the PsbJ family. As to quaternary structure, PSII is composed of 1 copy each of membrane proteins PsbA, PsbB, PsbC, PsbD, PsbE, PsbF, PsbH, PsbI, PsbJ, PsbK, PsbL, PsbM, PsbT, PsbX, PsbY, PsbZ, Psb30/Ycf12, at least 3 peripheral proteins of the oxygen-evolving complex and a large number of cofactors. It forms dimeric complexes.

The protein localises to the plastid. It localises to the chloroplast thylakoid membrane. Functionally, one of the components of the core complex of photosystem II (PSII). PSII is a light-driven water:plastoquinone oxidoreductase that uses light energy to abstract electrons from H(2)O, generating O(2) and a proton gradient subsequently used for ATP formation. It consists of a core antenna complex that captures photons, and an electron transfer chain that converts photonic excitation into a charge separation. The sequence is that of Photosystem II reaction center protein J from Stigeoclonium helveticum (Green alga).